Reading from the N-terminus, the 53-residue chain is Sec-independent protein translocase protein TatA (53 aa).

The chain crosses the membrane as a helical span at residues 1-21 (MGMSFSHLLIVLLIIFVLFGA).

The protein belongs to the TatA/E family. The Tat system comprises two distinct complexes: a TatABC complex, containing multiple copies of TatA, TatB and TatC subunits, and a separate TatA complex, containing only TatA subunits. Substrates initially bind to the TatABC complex, which probably triggers association of the separate TatA complex to form the active translocon.

It localises to the cell inner membrane. Part of the twin-arginine translocation (Tat) system that transports large folded proteins containing a characteristic twin-arginine motif in their signal peptide across membranes. TatA could form the protein-conducting channel of the Tat system. In Rickettsia akari (strain Hartford), this protein is Sec-independent protein translocase protein TatA.